A 448-amino-acid polypeptide reads, in one-letter code: Bifunctional protein GlmU (448 aa).

Positions 1–230 (MRSCLSIVLA…FDNIVGINNC (230 aa)) are pyrophosphorylase. UDP-N-acetyl-alpha-D-glucosamine is bound by residues 9-12 (LAAG), Lys23, Gln76, and 81-82 (GT). Position 106 (Asp106) interacts with Mg(2+). 4 residues coordinate UDP-N-acetyl-alpha-D-glucosamine: Gly142, Glu156, Asn171, and Asn228. Mg(2+) is bound at residue Asn228. Residues 231–251 (FELFEADSLWQKRKARDLMLS) form a linker region. The interval 252–448 (GVTILKPETV…VRLSGNQQKK (197 aa)) is N-acetyltransferase. Residues Arg317 and Lys335 each coordinate UDP-N-acetyl-alpha-D-glucosamine. His347 acts as the Proton acceptor in catalysis. Residues Tyr350 and Asn361 each coordinate UDP-N-acetyl-alpha-D-glucosamine. Residues Ala364, 370 to 371 (NY), Ser389, Ser407, and Arg424 contribute to the acetyl-CoA site.

In the N-terminal section; belongs to the N-acetylglucosamine-1-phosphate uridyltransferase family. It in the C-terminal section; belongs to the transferase hexapeptide repeat family. As to quaternary structure, homotrimer. Requires Mg(2+) as cofactor.

It is found in the cytoplasm. The catalysed reaction is alpha-D-glucosamine 1-phosphate + acetyl-CoA = N-acetyl-alpha-D-glucosamine 1-phosphate + CoA + H(+). The enzyme catalyses N-acetyl-alpha-D-glucosamine 1-phosphate + UTP + H(+) = UDP-N-acetyl-alpha-D-glucosamine + diphosphate. It functions in the pathway nucleotide-sugar biosynthesis; UDP-N-acetyl-alpha-D-glucosamine biosynthesis; N-acetyl-alpha-D-glucosamine 1-phosphate from alpha-D-glucosamine 6-phosphate (route II): step 2/2. It participates in nucleotide-sugar biosynthesis; UDP-N-acetyl-alpha-D-glucosamine biosynthesis; UDP-N-acetyl-alpha-D-glucosamine from N-acetyl-alpha-D-glucosamine 1-phosphate: step 1/1. The protein operates within bacterial outer membrane biogenesis; LPS lipid A biosynthesis. Catalyzes the last two sequential reactions in the de novo biosynthetic pathway for UDP-N-acetylglucosamine (UDP-GlcNAc). The C-terminal domain catalyzes the transfer of acetyl group from acetyl coenzyme A to glucosamine-1-phosphate (GlcN-1-P) to produce N-acetylglucosamine-1-phosphate (GlcNAc-1-P), which is converted into UDP-GlcNAc by the transfer of uridine 5-monophosphate (from uridine 5-triphosphate), a reaction catalyzed by the N-terminal domain. In Bartonella quintana (strain Toulouse) (Rochalimaea quintana), this protein is Bifunctional protein GlmU.